Here is a 476-residue protein sequence, read N- to C-terminus: Glutamate--tRNA ligase (476 aa).

The short motif at 9–19 (PSPTGTLHIGT) is the 'HIGH' region element. Residues 248 to 252 (KLSKR) carry the 'KMSKS' region motif. An ATP-binding site is contributed by Lys251.

This sequence belongs to the class-I aminoacyl-tRNA synthetase family. Glutamate--tRNA ligase type 1 subfamily. As to quaternary structure, monomer.

The protein localises to the cytoplasm. The catalysed reaction is tRNA(Glu) + L-glutamate + ATP = L-glutamyl-tRNA(Glu) + AMP + diphosphate. Functionally, catalyzes the attachment of glutamate to tRNA(Glu) in a two-step reaction: glutamate is first activated by ATP to form Glu-AMP and then transferred to the acceptor end of tRNA(Glu). In Prochlorococcus marinus (strain MIT 9303), this protein is Glutamate--tRNA ligase.